A 194-amino-acid polypeptide reads, in one-letter code: Orotate phosphoribosyltransferase (194 aa).

5-phospho-alpha-D-ribose 1-diphosphate contacts are provided by residues R102, K103, K106, H108, and 129-137 (EDVVTTGGS). Residues T133 and R161 each coordinate orotate.

This sequence belongs to the purine/pyrimidine phosphoribosyltransferase family. PyrE subfamily. Homodimer. It depends on Mg(2+) as a cofactor.

The catalysed reaction is orotidine 5'-phosphate + diphosphate = orotate + 5-phospho-alpha-D-ribose 1-diphosphate. The protein operates within pyrimidine metabolism; UMP biosynthesis via de novo pathway; UMP from orotate: step 1/2. Catalyzes the transfer of a ribosyl phosphate group from 5-phosphoribose 1-diphosphate to orotate, leading to the formation of orotidine monophosphate (OMP). This Synechococcus sp. (strain CC9902) protein is Orotate phosphoribosyltransferase.